We begin with the raw amino-acid sequence, 418 residues long: MGDKGTRVFKKASPNGKLTVYLGKRDFVDHIDLVDPVDGVVLVDPEYLKERRVYVTLTCAFRYGREDLDVLGLTFRKDLFVANVQSFPPAPEDKKPLTRLQERLIKKLGEHACPFTFEIPPNLPCSVTLQPGPEDTGKACGVDYEVKAFCAENLEEKIHKRNSVRLVIRKVQYAPERPGPQPTAETTRQFLMSDKPLHLEASLDKEIYYHGEPISVNVHVTNNTNKTVKKIKISVRQYADICLFNTAQYKCPVAMEEADDNVAPSSTFCKVYTLTPFLANNREKRGLALDGKLKHEDTNLASSTLLREGANREILGIIVSYKVKVKLVVSRGGLLGDLASSDVAVELPFTLMHPKPKEEPPHREVPESETPVDTNLIELDTNDDDIVFEDFARQRLKGMKDDKDEEDDGTGSPHLNNR.

The tract at residues 1–163 is interaction with SRC; that stretch reads MGDKGTRVFK…LEEKIHKRNS (163 aa). Residues 45-86 are interaction with CHRM2; the sequence is PEYLKERRVYVTLTCAFRYGREDLDVLGLTFRKDLFVANVQS. Phosphotyrosine is present on tyrosine 47. Residues lysine 250, methionine 255, lysine 324, and lysine 326 each coordinate 1D-myo-inositol hexakisphosphate. The interaction with TRAF6 stretch occupies residues 318–418; the sequence is IVSYKVKVKL…GTGSPHLNNR (101 aa). Disordered stretches follow at residues 353–375 and 397–418; these read HPKPKEEPPHREVPESETPVDTN and KGMKDDKDEEDDGTGSPHLNNR. Residues 355–366 show a composition bias toward basic and acidic residues; sequence KPKEEPPHREVP. Serine 412 carries the post-translational modification Phosphoserine.

This sequence belongs to the arrestin family. In terms of assembly, monomer. Homodimer. Homooligomer; the self-association is mediated by InsP6-binding. Heterooligomer with ARRB2; the association is mediated by InsP6-binding. Interacts with ADRB2 (phosphorylated). Interacts with CHRM2 (phosphorylated). Interacts with LHCGR. Interacts with CYTH2 and CASR. Interacts with AP2B1 (dephosphorylated); phosphorylation of AP2B1 disrupts the interaction. Interacts (dephosphorylated at Ser-412) with CLTC. Interacts with CCR2 and GRK2. Interacts with CRR5. Interacts with PTAFR (phosphorylated on serine residues). Interacts with CLTC and MAP2K3. Interacts with CREB1. Interacts with TRAF6. Interacts with IGF1R and MDM2. Interacts with C5AR1. Interacts with PDE4D. Interacts with SRC (via the SH3 domain and the protein kinase domain); the interaction is independent of the phosphorylation state of SRC C-terminus. Interacts with TACR1. Interacts with RAF1. Interacts with DVL1; the interaction is enhanced by phosphorylation of DVL1. Interacts with DVL2; the interaction is enhanced by phosphorylation of DVL2. Interacts with IGF1R. Interacts with CHUK, IKBKB and MAP3K14. Associates with MAP kinase p38. Part of a MAPK signaling complex consisting of TACR1, ARRB1, SRC, MAPK1 (activated) and MAPK3 (activated). Part of a MAPK signaling complex consisting of F2RL1, ARRB1, RAF1, MAPK1 (activated) and MAPK3 (activated). Interacts with GPR143. Interacts with MAP2K4/MKK4. Interacts with HCK and CXCR1 (phosphorylated). Interacts with ACKR3 and ACKR4. Interacts with ARRDC1; the interaction is direct. Interacts with GPR61, GPR62 and GPR135. Post-translationally, constitutively phosphorylated at in the cytoplasm. At the plasma membrane, is rapidly dephosphorylated, a process that is required for clathrin binding and ADRB2 endocytosis but not for ADRB2 binding and desensitization. Once internalized, is rephosphorylated. In terms of processing, the ubiquitination status appears to regulate the formation and trafficking of beta-arrestin-GPCR complexes and signaling. Ubiquitination appears to occur GPCR-specific. Ubiquitinated by MDM2; the ubiquitination is required for rapid internalization of ADRB2. Deubiquitinated by USP33; the deubiquitination leads to a dissociation of the beta-arrestin-GPCR complex. Stimulation of a class A GPCR, such as ADRB2, induces transient ubiquitination and subsequently promotes association with USP33.

It is found in the cytoplasm. Its subcellular location is the nucleus. It localises to the cell membrane. The protein resides in the membrane. The protein localises to the clathrin-coated pit. It is found in the cell projection. Its subcellular location is the pseudopodium. It localises to the cytoplasmic vesicle. Its function is as follows. Functions in regulating agonist-mediated G-protein coupled receptor (GPCR) signaling by mediating both receptor desensitization and resensitization processes. During homologous desensitization, beta-arrestins bind to the GPRK-phosphorylated receptor and sterically preclude its coupling to the cognate G-protein; the binding appears to require additional receptor determinants exposed only in the active receptor conformation. The beta-arrestins target many receptors for internalization by acting as endocytic adapters (CLASPs, clathrin-associated sorting proteins) and recruiting the GPRCs to the adapter protein 2 complex 2 (AP-2) in clathrin-coated pits (CCPs). However, the extent of beta-arrestin involvement appears to vary significantly depending on the receptor, agonist and cell type. Internalized arrestin-receptor complexes traffic to intracellular endosomes, where they remain uncoupled from G-proteins. Two different modes of arrestin-mediated internalization occur. Class A receptors, like ADRB2, OPRM1, ENDRA, D1AR and ADRA1B dissociate from beta-arrestin at or near the plasma membrane and undergo rapid recycling. Class B receptors, like AVPR2, AGTR1, NTSR1, TRHR and TACR1 internalize as a complex with arrestin and traffic with it to endosomal vesicles, presumably as desensitized receptors, for extended periods of time. Receptor resensitization then requires that receptor-bound arrestin is removed so that the receptor can be dephosphorylated and returned to the plasma membrane. Involved in internalization of P2RY4 and UTP-stimulated internalization of P2RY2. Involved in phosphorylation-dependent internalization of OPRD1 ands subsequent recycling. Involved in the degradation of cAMP by recruiting cAMP phosphodiesterases to ligand-activated receptors. Beta-arrestins function as multivalent adapter proteins that can switch the GPCR from a G-protein signaling mode that transmits short-lived signals from the plasma membrane via small molecule second messengers and ion channels to a beta-arrestin signaling mode that transmits a distinct set of signals that are initiated as the receptor internalizes and transits the intracellular compartment. Acts as a signaling scaffold for MAPK pathways such as MAPK1/3 (ERK1/2). ERK1/2 activated by the beta-arrestin scaffold is largely excluded from the nucleus and confined to cytoplasmic locations such as endocytic vesicles, also called beta-arrestin signalosomes. Recruits c-Src/SRC to ADRB2 resulting in ERK activation. GPCRs for which the beta-arrestin-mediated signaling relies on both ARRB1 and ARRB2 (codependent regulation) include ADRB2, F2RL1 and PTH1R. For some GPCRs the beta-arrestin-mediated signaling relies on either ARRB1 or ARRB2 and is inhibited by the other respective beta-arrestin form (reciprocal regulation). Inhibits ERK1/2 signaling in AGTR1- and AVPR2-mediated activation (reciprocal regulation). Is required for SP-stimulated endocytosis of NK1R and recruits c-Src/SRC to internalized NK1R resulting in ERK1/2 activation, which is required for the antiapoptotic effects of SP. Is involved in proteinase-activated F2RL1-mediated ERK activity. Acts as a signaling scaffold for the AKT1 pathway. Is involved in alpha-thrombin-stimulated AKT1 signaling. Is involved in IGF1-stimulated AKT1 signaling leading to increased protection from apoptosis. Involved in activation of the p38 MAPK signaling pathway and in actin bundle formation. Involved in F2RL1-mediated cytoskeletal rearrangement and chemotaxis. Involved in AGTR1-mediated stress fiber formation by acting together with GNAQ to activate RHOA. Appears to function as signaling scaffold involved in regulation of MIP-1-beta-stimulated CCR5-dependent chemotaxis. Involved in attenuation of NF-kappa-B-dependent transcription in response to GPCR or cytokine stimulation by interacting with and stabilizing CHUK. May serve as nuclear messenger for GPCRs. Involved in OPRD1-stimulated transcriptional regulation by translocating to CDKN1B and FOS promoter regions and recruiting EP300 resulting in acetylation of histone H4. Involved in regulation of LEF1 transcriptional activity via interaction with DVL1 and/or DVL2 Also involved in regulation of receptors other than GPCRs. Involved in Toll-like receptor and IL-1 receptor signaling through the interaction with TRAF6 which prevents TRAF6 autoubiquitination and oligomerization required for activation of NF-kappa-B and JUN. Involved in IL8-mediated granule release in neutrophils. Binds phosphoinositides. Binds inositolhexakisphosphate (InsP6). Required for atypical chemokine receptor ACKR2-induced RAC1-LIMK1-PAK1-dependent phosphorylation of cofilin (CFL1) and for the up-regulation of ACKR2 from endosomal compartment to cell membrane, increasing its efficiency in chemokine uptake and degradation. Involved in the internalization of the atypical chemokine receptor ACKR3. Negatively regulates the NOTCH signaling pathway by mediating the ubiquitination and degradation of NOTCH1 by ITCH. Participates in the recruitment of the ubiquitin-protein ligase to the receptor. In Mus musculus (Mouse), this protein is Beta-arrestin-1 (Arrb1).